The primary structure comprises 256 residues: Probable cyclic nucleotide phosphodiesterase Fisuc_1441/FSU_1912 (256 aa).

The Fe cation site is built by Asp20, His22, Asp59, Asn89, His156, His196, and His198. AMP contacts are provided by residues His22, Asp59, and 89 to 90 (NH). His198 contributes to the AMP binding site.

The protein belongs to the cyclic nucleotide phosphodiesterase class-III family. Fe(2+) is required as a cofactor.

The polypeptide is Probable cyclic nucleotide phosphodiesterase Fisuc_1441/FSU_1912 (Fibrobacter succinogenes (strain ATCC 19169 / S85)).